A 1063-amino-acid polypeptide reads, in one-letter code: NAD-specific glutamate dehydrogenase (1063 aa).

The protein belongs to the Glu/Leu/Phe/Val dehydrogenases family. Highly divergent. Homotetramer.

It catalyses the reaction L-glutamate + NAD(+) + H2O = 2-oxoglutarate + NH4(+) + NADH + H(+). Allosterically activated by NADP(+). This Achlya klebsiana protein is NAD-specific glutamate dehydrogenase.